The chain runs to 132 residues: uncharacterized protein (132 aa).

Residues 66–86 (LPPMLLVLAALFVKGLIPLVL) traverse the membrane as a helical segment.

The protein localises to the membrane. This is an uncharacterized protein from Saccharomyces cerevisiae (strain ATCC 204508 / S288c) (Baker's yeast).